The chain runs to 1230 residues: Serine/threonine-protein kinase CST20 (1230 aa).

Residues 1–20 (MSILSENNPTPTSITDPNKS) show a composition bias toward polar residues. Disordered regions lie at residues 1–384 (MSIL…TAHN) and 413–470 (SSLE…HSQE). Low complexity-rich tracts occupy residues 57–70 (NTTSANTSSLSLGS) and 96–125 (SGSGDIDDSQQSHNNNNNNNNNNNESNPES). Over residues 150–161 (HQGDDSDNEKQY) the composition is skewed to basic and acidic residues. Composition is skewed to polar residues over residues 175–197 (DSYSPGTLESPGTLNALETNNVS), 207–224 (TSSLEDLSLSLQHQNENA), and 237–246 (PTSKTSSFHD). Positions 248 to 257 (SSVISSSTSV) are enriched in low complexity. Composition is skewed to polar residues over residues 262 to 277 (SNPTSTRGSHLSSYKS) and 311 to 330 (DTLSSATNSPNLLRNDTLQG). Low complexity-rich tracts occupy residues 349-381 (NTSATSRNTSGTSTSTVVKNSRSGTSKSTSTST) and 439-468 (KVRGVFSSMFGKNKSTSSSSSSNSGSNSHS). Positions 475–488 (ISTPFNAKHLAHVG) constitute a CRIB domain. Disordered regions lie at residues 545 to 831 (FHFD…ALAD) and 867 to 919 (LREK…KQAA). Positions 550–561 (NKSSSSGWSNEN) are enriched in polar residues. The span at 570–581 (SNSGSGSGGGGA) shows a compositional bias: gly residues. The segment covering 604 to 613 (ITPSQSMPTK) has biased composition (polar residues). Over residues 614–628 (TESKQSENQHPHEDN) the composition is skewed to basic and acidic residues. Residues 629-642 (ATQYTPRTPTSHVQ) show a composition bias toward polar residues. 3 stretches are compositionally biased toward low complexity: residues 670 to 683 (PSSQSLPRSDSQSD), 696 to 710 (SPSKIKIRSISSKSL), and 736 to 749 (SIPKSKSHSASLSS). Over residues 750–761 (QLRPATNGSTTA) the composition is skewed to polar residues. Residues 789 to 807 (APPPPPSAPPAPPVPPAPP) show a composition bias toward pro residues. Polar residues predominate over residues 811 to 826 (LSEQTSEIPQQRTAPS). The span at 867–876 (LREKNERQNR) shows a compositional bias: basic and acidic residues. The segment covering 877 to 892 (QQETGQNNADTASGGS) has biased composition (polar residues). Residues 953-1205 (YVDLVKIGQG…ADELLHDNFI (253 aa)) enclose the Protein kinase domain. Residues 959 to 967 (IGQGASGGV) and lysine 983 contribute to the ATP site. Residue aspartate 1073 is the Proton acceptor of the active site.

It belongs to the protein kinase superfamily. STE Ser/Thr protein kinase family. STE20 subfamily.

The protein localises to the cytoplasm. It localises to the nucleus. It catalyses the reaction L-seryl-[protein] + ATP = O-phospho-L-seryl-[protein] + ADP + H(+). It carries out the reaction L-threonyl-[protein] + ATP = O-phospho-L-threonyl-[protein] + ADP + H(+). Functionally, MAP4K component of the MAPK pathway required for the mating pheromone response, and the regulation of cell polarity and cell cycle. Phosphorylates histone H2B to form H2BS10ph. Required for hyphal formation and virulence. This chain is Serine/threonine-protein kinase CST20 (CST20), found in Candida albicans (Yeast).